Here is a 564-residue protein sequence, read N- to C-terminus: MTISPETLAKSILDGFHSHYRRFQVLTQGARERFLKRDWTAVVSAASERIHYYDHQVGTTAKKVERRVGTELDEGLWLATRQRYQQLLKFHPQAELAETFYNSVFCRVFDRAYFNNDYIFVETVLANHIPVPVENECHSYFPVVDGLEGTLTRVFEDIGLGGEFENFENDIEQLRDKFFERATETDIEAHNLRIDVLKSPFYRNKAAYIVGRVVTENNHYPFIVPVLINSQGKLYVDAFITRSDRMATIFGFARSYFMVETEAPSALVRFLKDLMPHKTLAELYSSVGFHKQGKTEFYREFLHHLRRTDDQLSAAPGVKGMVMTVFTLPSFPYVFKVIKDRLGGTKEFGRQTVIDRYRMVKRHDRVGRMADTLEFVDVALPLKRISADLLDEFKQTIANSISIEGDTLVIHQLFVERRMTPLNLYLEYANDEEVDAAMDDYGRALKEMMAANIFPGDMLLKNFGVTRHKRVVFYDYDEVRYLTDMSFRRLPENDWEVSYAPDDVFPQQLAQFAVPQAKYRNKLLKRHPELIDSAYWCRVQKNIRKGELTDVFPYDADLRFTRRF.

ATP is bound by residues 315–321 (APGVKGM) and lysine 336. Residue aspartate 371 is part of the active site.

Belongs to the AceK family.

The protein localises to the cytoplasm. It catalyses the reaction L-seryl-[isocitrate dehydrogenase] + ATP = O-phospho-L-seryl-[isocitrate dehydrogenase] + ADP + H(+). Functionally, bifunctional enzyme which can phosphorylate or dephosphorylate isocitrate dehydrogenase (IDH) on a specific serine residue. This is a regulatory mechanism which enables bacteria to bypass the Krebs cycle via the glyoxylate shunt in response to the source of carbon. When bacteria are grown on glucose, IDH is fully active and unphosphorylated, but when grown on acetate or ethanol, the activity of IDH declines drastically concomitant with its phosphorylation. This is Isocitrate dehydrogenase kinase/phosphatase from Idiomarina loihiensis (strain ATCC BAA-735 / DSM 15497 / L2-TR).